Here is a 359-residue protein sequence, read N- to C-terminus: Endoglucanase 1 (359 aa).

Disordered stretches follow at residues 1 to 26 (MENPRTTPTPTPLRRRRSERRARGGR) and 47 to 72 (TGASPSPAPPASPAPSADSGTADAGT). Residues 13 to 24 (LRRRRSERRARG) are compositionally biased toward basic residues. Residues 60–72 (APSADSGTADAGT) are compositionally biased toward low complexity. The active site involves D154. C155 and C199 are joined by a disulfide. D192 serves as the catalytic Proton donor. The active-site Nucleophile is D339.

The protein belongs to the glycosyl hydrolase 6 (cellulase B) family.

The catalysed reaction is Endohydrolysis of (1-&gt;4)-beta-D-glucosidic linkages in cellulose, lichenin and cereal beta-D-glucans.. Functionally, CMCase I preferentially hydrolyzes carboxymethyl cellulose (CMC). This is Endoglucanase 1 (casA) from Streptomyces sp. (strain KSM-9).